The primary structure comprises 445 residues: Bifunctional protein GlmU (445 aa).

Positions 1–218 are pyrophosphorylase; sequence MRALVLAAGK…LLEITGVNTR (218 aa). Residues 6 to 9, K20, Q69, 74 to 75, 96 to 98, G134, E147, N162, and N216 each bind UDP-N-acetyl-alpha-D-glucosamine; these read LAAG, GT, and YGD. D98 contacts Mg(2+). A Mg(2+)-binding site is contributed by N216. Residues 219-239 form a linker region; the sequence is KTLVWLEEQLRMRKIEELLEN. The tract at residues 240–445 is N-acetyltransferase; the sequence is GVTILDPATT…GWVLKKRKEE (206 aa). UDP-N-acetyl-alpha-D-glucosamine contacts are provided by R321 and K339. The active-site Proton acceptor is H351. Y354 and N365 together coordinate UDP-N-acetyl-alpha-D-glucosamine. Acetyl-CoA-binding positions include A368, 374 to 375, S393, A411, and R428; that span reads NY.

In the N-terminal section; belongs to the N-acetylglucosamine-1-phosphate uridyltransferase family. This sequence in the C-terminal section; belongs to the transferase hexapeptide repeat family. In terms of assembly, homotrimer. Requires Mg(2+) as cofactor.

It localises to the cytoplasm. It catalyses the reaction alpha-D-glucosamine 1-phosphate + acetyl-CoA = N-acetyl-alpha-D-glucosamine 1-phosphate + CoA + H(+). The catalysed reaction is N-acetyl-alpha-D-glucosamine 1-phosphate + UTP + H(+) = UDP-N-acetyl-alpha-D-glucosamine + diphosphate. It participates in nucleotide-sugar biosynthesis; UDP-N-acetyl-alpha-D-glucosamine biosynthesis; N-acetyl-alpha-D-glucosamine 1-phosphate from alpha-D-glucosamine 6-phosphate (route II): step 2/2. The protein operates within nucleotide-sugar biosynthesis; UDP-N-acetyl-alpha-D-glucosamine biosynthesis; UDP-N-acetyl-alpha-D-glucosamine from N-acetyl-alpha-D-glucosamine 1-phosphate: step 1/1. It functions in the pathway bacterial outer membrane biogenesis; LPS lipid A biosynthesis. Its function is as follows. Catalyzes the last two sequential reactions in the de novo biosynthetic pathway for UDP-N-acetylglucosamine (UDP-GlcNAc). The C-terminal domain catalyzes the transfer of acetyl group from acetyl coenzyme A to glucosamine-1-phosphate (GlcN-1-P) to produce N-acetylglucosamine-1-phosphate (GlcNAc-1-P), which is converted into UDP-GlcNAc by the transfer of uridine 5-monophosphate (from uridine 5-triphosphate), a reaction catalyzed by the N-terminal domain. The chain is Bifunctional protein GlmU from Thermotoga maritima (strain ATCC 43589 / DSM 3109 / JCM 10099 / NBRC 100826 / MSB8).